Consider the following 372-residue polypeptide: Nickel transporter NicT (372 aa).

8 helical membrane-spanning segments follow: residues 30–50 (LMFAVIVALHLVGWLTVTLLV), 55–75 (LSLGGKAFGIGVGLTAYTLGL), 104–124 (VGFFFSLGHSTVVFGLAVMLV), 152–172 (ISGAFLYLIGILNVIVLVGIV), 218–238 (VGFLFGLGFDTATEIALLVLA), 245–265 (GLPWYAILCLPVLFAAGMCLL), 294–314 (VTGLSVAVALLIGSVELLGLI), and 335–355 (TVGFVVVAMFALTWAIALLVW).

This sequence belongs to the NiCoT transporter (TC 2.A.52) family.

The protein localises to the cell membrane. It catalyses the reaction Ni(2+)(in) = Ni(2+)(out). Export of the fluoroquinolone antibiotic norfloxacin is inhibited by the proton ionophore carbonyl cyanide m-chlorophenylhydrazone (CCCP). Nickel may influence the extrusion of antibiotics possibly by facilitating the proton motive force-dependent efflux process. Its function is as follows. Involved in nickel uptake. In addition, acts as a drug efflux pump and contributes to moderate tolerance towards different classes of antibiotics, including fluoroquinolones, aminoglycosides and the anti-TB drug isoniazid, with a preference for fluoroquinolones. The drug efflux function is probably dependent on proton motive force (pmf) or ion gradient, and might be facilitated by the presence of Ni(2+) ions. The sequence is that of Nickel transporter NicT from Mycobacterium tuberculosis (strain ATCC 25618 / H37Rv).